The following is a 382-amino-acid chain: D-galactonate dehydratase (382 aa).

D183 is a binding site for Mg(2+). Catalysis depends on H185, which acts as the Proton donor. Residues E209 and E235 each contribute to the Mg(2+) site. Catalysis depends on H285, which acts as the Proton acceptor.

The protein belongs to the mandelate racemase/muconate lactonizing enzyme family. GalD subfamily. The cofactor is Mg(2+).

It carries out the reaction D-galactonate = 2-dehydro-3-deoxy-D-galactonate + H2O. Its pathway is carbohydrate acid metabolism; D-galactonate degradation; D-glyceraldehyde 3-phosphate and pyruvate from D-galactonate: step 1/3. Its function is as follows. Catalyzes the dehydration of D-galactonate to 2-keto-3-deoxy-D-galactonate. This is D-galactonate dehydratase from Ralstonia nicotianae (strain ATCC BAA-1114 / GMI1000) (Ralstonia solanacearum).